The following is a 284-amino-acid chain: Tropomyosin Per a 7.0101 (284 aa).

Positions 22–266 form a coiled coil; sequence ALLCEQQARD…EDELVHEKEK (245 aa).

The protein belongs to the tropomyosin family. As to quaternary structure, homodimer.

In terms of biological role, tropomyosin, in association with the troponin complex, plays a central role in the calcium dependent regulation of muscle contraction. This chain is Tropomyosin Per a 7.0101, found in Periplaneta americana (American cockroach).